We begin with the raw amino-acid sequence, 258 residues long: NAD kinase (258 aa).

Residue Asp-51 is the Proton acceptor of the active site. Residues 51 to 52, Lys-56, 119 to 120, Lys-130, Asp-149, 160 to 165, and Ala-184 contribute to the NAD(+) site; these read DG, ND, and TAYSLS.

It belongs to the NAD kinase family. Requires a divalent metal cation as cofactor.

Its subcellular location is the cytoplasm. It carries out the reaction NAD(+) + ATP = ADP + NADP(+) + H(+). In terms of biological role, involved in the regulation of the intracellular balance of NAD and NADP, and is a key enzyme in the biosynthesis of NADP. Catalyzes specifically the phosphorylation on 2'-hydroxyl of the adenosine moiety of NAD to yield NADP. The chain is NAD kinase from Thermotoga sp. (strain RQ2).